The sequence spans 85 residues: MAKPDIHPKWYPEAKVYCDGEVVMTVGSTQEELHVDVWSGNHPFFTGTQKIIDTEGRVERFMRKYGMSESQGAGGKGNAKKKDEK.

A disordered region spans residues 64 to 85 (KYGMSESQGAGGKGNAKKKDEK).

The protein belongs to the bacterial ribosomal protein bL31 family. Type A subfamily. In terms of assembly, part of the 50S ribosomal subunit.

In terms of biological role, binds the 23S rRNA. The polypeptide is Large ribosomal subunit protein bL31 (Acaryochloris marina (strain MBIC 11017)).